The following is a 312-amino-acid chain: Methionyl-tRNA formyltransferase (312 aa).

A (6S)-5,6,7,8-tetrahydrofolate-binding site is contributed by 110 to 113; it reads SLLP.

Belongs to the Fmt family.

It catalyses the reaction L-methionyl-tRNA(fMet) + (6R)-10-formyltetrahydrofolate = N-formyl-L-methionyl-tRNA(fMet) + (6S)-5,6,7,8-tetrahydrofolate + H(+). Functionally, attaches a formyl group to the free amino group of methionyl-tRNA(fMet). The formyl group appears to play a dual role in the initiator identity of N-formylmethionyl-tRNA by promoting its recognition by IF2 and preventing the misappropriation of this tRNA by the elongation apparatus. The protein is Methionyl-tRNA formyltransferase of Mycobacterium ulcerans (strain Agy99).